Consider the following 523-residue polypeptide: Siroheme synthase (523 aa).

The tract at residues 1 to 203 is precorrin-2 dehydrogenase /sirohydrochlorin ferrochelatase; the sequence is MNTFPLFFKL…GNENEAIAQL (203 aa). Residues 22–23 and 43–44 each bind NAD(+); these read DV and PS. Ser-128 carries the post-translational modification Phosphoserine. The interval 231–523 is uroporphyrinogen-III C-methyltransferase; the sequence is GEVYIVGAGP…DGGLEQLVID (293 aa). Pro-240 contributes to the S-adenosyl-L-methionine binding site. Asp-263 (proton acceptor) is an active-site residue. Residue Lys-285 is the Proton donor of the active site. S-adenosyl-L-methionine is bound by residues 316–318, Ile-321, 346–347, Met-398, and Ala-427; these read GGD and TA.

The protein in the N-terminal section; belongs to the precorrin-2 dehydrogenase / sirohydrochlorin ferrochelatase family. It in the C-terminal section; belongs to the precorrin methyltransferase family.

The enzyme catalyses uroporphyrinogen III + 2 S-adenosyl-L-methionine = precorrin-2 + 2 S-adenosyl-L-homocysteine + H(+). The catalysed reaction is precorrin-2 + NAD(+) = sirohydrochlorin + NADH + 2 H(+). It catalyses the reaction siroheme + 2 H(+) = sirohydrochlorin + Fe(2+). It participates in cofactor biosynthesis; adenosylcobalamin biosynthesis; precorrin-2 from uroporphyrinogen III: step 1/1. The protein operates within cofactor biosynthesis; adenosylcobalamin biosynthesis; sirohydrochlorin from precorrin-2: step 1/1. Its pathway is porphyrin-containing compound metabolism; siroheme biosynthesis; precorrin-2 from uroporphyrinogen III: step 1/1. It functions in the pathway porphyrin-containing compound metabolism; siroheme biosynthesis; siroheme from sirohydrochlorin: step 1/1. It participates in porphyrin-containing compound metabolism; siroheme biosynthesis; sirohydrochlorin from precorrin-2: step 1/1. In terms of biological role, multifunctional enzyme that catalyzes the SAM-dependent methylations of uroporphyrinogen III at position C-2 and C-7 to form precorrin-2 via precorrin-1. Then it catalyzes the NAD-dependent ring dehydrogenation of precorrin-2 to yield sirohydrochlorin. Finally, it catalyzes the ferrochelation of sirohydrochlorin to yield siroheme. This Psychrobacter cryohalolentis (strain ATCC BAA-1226 / DSM 17306 / VKM B-2378 / K5) protein is Siroheme synthase.